We begin with the raw amino-acid sequence, 94 residues long: CRISPR-associated endoribonuclease Cas2 (94 aa).

Residue Asp-11 participates in Mg(2+) binding.

This sequence belongs to the CRISPR-associated endoribonuclease Cas2 protein family. In terms of assembly, homodimer, forms a heterotetramer with a Cas1 homodimer. It depends on Mg(2+) as a cofactor.

Functionally, CRISPR (clustered regularly interspaced short palindromic repeat), is an adaptive immune system that provides protection against mobile genetic elements (viruses, transposable elements and conjugative plasmids). CRISPR clusters contain sequences complementary to antecedent mobile elements and target invading nucleic acids. CRISPR clusters are transcribed and processed into CRISPR RNA (crRNA). Functions as a ssRNA-specific endoribonuclease. Involved in the integration of spacer DNA into the CRISPR cassette. This is CRISPR-associated endoribonuclease Cas2 from Thermus thermophilus (strain ATCC 27634 / DSM 579 / HB8).